The following is a 213-amino-acid chain: Orotate phosphoribosyltransferase (213 aa).

A 5-phospho-alpha-D-ribose 1-diphosphate-binding site is contributed by Lys-26. 34–35 (FF) is a binding site for orotate. Residues 72–73 (YK), Arg-99, Lys-100, Lys-103, His-105, and 124–132 (DDVITAGTA) contribute to the 5-phospho-alpha-D-ribose 1-diphosphate site. Residues Thr-128 and Arg-156 each contribute to the orotate site.

This sequence belongs to the purine/pyrimidine phosphoribosyltransferase family. PyrE subfamily. As to quaternary structure, homodimer. The cofactor is Mg(2+).

The catalysed reaction is orotidine 5'-phosphate + diphosphate = orotate + 5-phospho-alpha-D-ribose 1-diphosphate. It participates in pyrimidine metabolism; UMP biosynthesis via de novo pathway; UMP from orotate: step 1/2. In terms of biological role, catalyzes the transfer of a ribosyl phosphate group from 5-phosphoribose 1-diphosphate to orotate, leading to the formation of orotidine monophosphate (OMP). The polypeptide is Orotate phosphoribosyltransferase (Photorhabdus laumondii subsp. laumondii (strain DSM 15139 / CIP 105565 / TT01) (Photorhabdus luminescens subsp. laumondii)).